A 212-amino-acid chain; its full sequence is Pyrrolidone-carboxylate peptidase (212 aa).

Catalysis depends on residues glutamate 78, cysteine 141, and histidine 165.

This sequence belongs to the peptidase C15 family. In terms of assembly, homotetramer.

Its subcellular location is the cytoplasm. The enzyme catalyses Release of an N-terminal pyroglutamyl group from a polypeptide, the second amino acid generally not being Pro.. Removes 5-oxoproline from various penultimate amino acid residues except L-proline. The polypeptide is Pyrrolidone-carboxylate peptidase (Staphylococcus haemolyticus (strain JCSC1435)).